Here is a 529-residue protein sequence, read N- to C-terminus: MSLNSSLSCRKELSNLTEEEGGEGGVIITQFIAIIVITIFVCLGNLVIVVTLYKKSYLLTLSNKFVFSLTLSNFLLSVLVLPFVVTSSIRREWIFGVVWCNFSALLYLLISSASMLTLGVIAIDRYYAVLYPMVYPMKITGNRAVMALVYIWLHSLIGCLPPLFGWSSVEFDEFKWMCVAAWHREPGYTAFWQIWCALFPFLVMLVCYGFIFRVARVKARKVHCGTVVIVEEDAQRTGRKNSSTSTSSSGSRRNAFQGVVYSANQCKALITILVVLGAFMVTWGPYMVVIASEALWGKSSVSPSLETWATWLSFASAVCHPLIYGLWNKTVRKELLGMCFGDRYYREPFVQRQRTSRLFSISNRITDLGLSPHLTALMAGGQPLGHSSSTGDTGFSCSQDSGTDMMLLEDYTSDDNPPSHCTCPPKRRSSVTFEDEVEQIKEAAKNSILHVKAEVHKSLDSYAASLAKAIEAEAKINLFGEEALPGVLVTARTVPGGGFGGRRGSRTLVSQRLQLQSIEEGDVLAAEQR.

Residues Met1–Gln30 lie on the Extracellular side of the membrane. Residues Asn4 and Asn15 are each glycosylated (N-linked (GlcNAc...) asparagine). A helical membrane pass occupies residues Phe31–Thr51. Residues Leu52–Lys64 are Cytoplasmic-facing. The chain crosses the membrane as a helical span at residues Phe65–Val85. Residues Thr86–Asn101 lie on the Extracellular side of the membrane. Cys100 and Cys178 are oxidised to a cystine. A helical transmembrane segment spans residues Phe102–Ile123. Residues Asp124 to Arg143 lie on the Cytoplasmic side of the membrane. Residues Ala144–Phe164 traverse the membrane as a helical segment. At Gly165–Ala190 the chain is on the extracellular side. Residues Phe191–Ile211 traverse the membrane as a helical segment. Residues Phe212–Leu269 are Cytoplasmic-facing. Residues Ile270–Ile290 form a helical membrane-spanning segment. The Extracellular portion of the chain corresponds to Ala291 to Glu306. Residues Thr307–Trp327 traverse the membrane as a helical segment. The Cytoplasmic segment spans residues Asn328–Arg529.

This sequence belongs to the G-protein coupled receptor 1 family.

It is found in the cell projection. The protein resides in the cilium membrane. Its subcellular location is the cell membrane. Key negative regulator of Shh signaling, which promotes the processing of GLI3 into GLI3R during neural tube development. Recruited by TULP3 and the IFT-A complex to primary cilia and acts as a regulator of the PKA-dependent basal repression machinery in Shh signaling by increasing cAMP levels, leading to promote the PKA-dependent processing of GLI3 into GLI3R and repress the Shh signaling. In presence of SHH, it is removed from primary cilia and is internalized into recycling endosomes, preventing its activity and allowing activation of the Shh signaling. Its ligand is unknown. This is G-protein coupled receptor 161 (GPR161) from Homo sapiens (Human).